Reading from the N-terminus, the 177-residue chain is Large ribosomal subunit protein uL5 (177 aa).

The protein belongs to the universal ribosomal protein uL5 family. As to quaternary structure, part of the 50S ribosomal subunit; part of the 5S rRNA/L5/L18/L25 subcomplex. Contacts the 5S rRNA and the P site tRNA. Forms a bridge to the 30S subunit in the 70S ribosome.

Its function is as follows. This is one of the proteins that bind and probably mediate the attachment of the 5S RNA into the large ribosomal subunit, where it forms part of the central protuberance. In the 70S ribosome it contacts protein S13 of the 30S subunit (bridge B1b), connecting the 2 subunits; this bridge is implicated in subunit movement. Contacts the P site tRNA; the 5S rRNA and some of its associated proteins might help stabilize positioning of ribosome-bound tRNAs. This is Large ribosomal subunit protein uL5 from Ehrlichia ruminantium (strain Welgevonden).